The primary structure comprises 84 residues: Exendin-2-long (84 aa).

An N-terminal signal peptide occupies residues 1 to 23 (MKSILWLCVFGLLIATLFPVSWQ). The propeptide occupies 24–44 (MAIKSRLSSEDSETDQRLFES).

This sequence belongs to the glucagon family. Post-translationally, an amidated Pro-81 is described. Such an amidation is however not compatible with the sequence displayed. Indeed cDNAs do not encode a Gly that could serve as substrate for peptide alpha-amidation. As to expression, expressed by the venom gland. Not expressed in the pancreas, liver, stomach, small intestine, lung, heart, kidney, spleen, ovary, and brain.

The protein localises to the secreted. Its function is as follows. Has vasoactive intestinal peptide(VIP)/secretin-like biological activity. Interacts with rat and human VIP receptors 1 (VIPR1) and 2 (VIPR2), with the highest affinity for the human VIPR2. Induces hypotension that is mediated by relaxation of cardiac smooth muscle. This vasodilation may not be transduced by VIP or PACAP receptors. This chain is Exendin-2-long, found in Heloderma suspectum (Gila monster).